The following is a 239-amino-acid chain: MGKSLIQQRRGKGSPTFRSPSHRFRGAVKYIPLNYTQDKTIRGVVEEIMHDPGRTAPVARVKFENGMEKLIIAPEGLLVGQEIYIGPDAPVEIGNTLPLAKIPEGTYIYNIEGVPGDGGKYVRAGGTYALVVSREKDKVIVQLPSGELKAFDPNCRATIGVVAGGGRLEKPLVKAGKAYYKYKARNKFWPTPRGVKMNAVNHPFGGKEHHPGKPTTTSRRAPPGRKVGHIAARRTGRRK.

2 disordered regions span residues 1-20 and 203-239; these read MGKS…FRSP and PFGG…GRRK. The segment covering 222 to 239 has biased composition (basic residues); it reads PPGRKVGHIAARRTGRRK.

This sequence belongs to the universal ribosomal protein uL2 family. In terms of assembly, part of the 50S ribosomal subunit. Forms a bridge to the 30S subunit in the 70S ribosome.

Functionally, one of the primary rRNA binding proteins. Required for association of the 30S and 50S subunits to form the 70S ribosome, for tRNA binding and peptide bond formation. It has been suggested to have peptidyltransferase activity; this is somewhat controversial. Makes several contacts with the 16S rRNA in the 70S ribosome. This chain is Large ribosomal subunit protein uL2, found in Pyrococcus horikoshii (strain ATCC 700860 / DSM 12428 / JCM 9974 / NBRC 100139 / OT-3).